Consider the following 568-residue polypeptide: Urease subunit alpha (568 aa).

In terms of domain architecture, Urease spans 130–568 (GGIDTHIHFI…LPMAQRYFLF (439 aa)). Ni(2+) is bound by residues His-135, His-137, and Lys-218. Lys-218 is subject to N6-carboxylysine. Residue His-220 coordinates substrate. Residues His-247 and His-273 each coordinate Ni(2+). His-321 acts as the Proton donor in catalysis. Asp-361 contacts Ni(2+).

It belongs to the metallo-dependent hydrolases superfamily. Urease alpha subunit family. In terms of assembly, heterotrimer of UreA (gamma), UreB (beta) and UreC (alpha) subunits. Three heterotrimers associate to form the active enzyme. Requires Ni cation as cofactor. Carboxylation allows a single lysine to coordinate two nickel ions.

Its subcellular location is the cytoplasm. It carries out the reaction urea + 2 H2O + H(+) = hydrogencarbonate + 2 NH4(+). It functions in the pathway nitrogen metabolism; urea degradation; CO(2) and NH(3) from urea (urease route): step 1/1. The protein is Urease subunit alpha of Burkholderia ambifaria (strain ATCC BAA-244 / DSM 16087 / CCUG 44356 / LMG 19182 / AMMD) (Burkholderia cepacia (strain AMMD)).